The sequence spans 211 residues: Protein-L-isoaspartate O-methyltransferase (211 aa).

Residue serine 62 is part of the active site.

It belongs to the methyltransferase superfamily. L-isoaspartyl/D-aspartyl protein methyltransferase family.

It is found in the cytoplasm. The catalysed reaction is [protein]-L-isoaspartate + S-adenosyl-L-methionine = [protein]-L-isoaspartate alpha-methyl ester + S-adenosyl-L-homocysteine. Its function is as follows. Catalyzes the methyl esterification of L-isoaspartyl residues in peptides and proteins that result from spontaneous decomposition of normal L-aspartyl and L-asparaginyl residues. It plays a role in the repair and/or degradation of damaged proteins. The sequence is that of Protein-L-isoaspartate O-methyltransferase from Shewanella halifaxensis (strain HAW-EB4).